A 265-amino-acid polypeptide reads, in one-letter code: Tryptophan synthase alpha chain (265 aa).

Catalysis depends on proton acceptor residues Glu49 and Asp60.

The protein belongs to the TrpA family. In terms of assembly, tetramer of two alpha and two beta chains.

The enzyme catalyses (1S,2R)-1-C-(indol-3-yl)glycerol 3-phosphate + L-serine = D-glyceraldehyde 3-phosphate + L-tryptophan + H2O. It functions in the pathway amino-acid biosynthesis; L-tryptophan biosynthesis; L-tryptophan from chorismate: step 5/5. In terms of biological role, the alpha subunit is responsible for the aldol cleavage of indoleglycerol phosphate to indole and glyceraldehyde 3-phosphate. This Polynucleobacter asymbioticus (strain DSM 18221 / CIP 109841 / QLW-P1DMWA-1) (Polynucleobacter necessarius subsp. asymbioticus) protein is Tryptophan synthase alpha chain.